The primary structure comprises 148 residues: Large ribosomal subunit protein uL15 (148 aa).

Positions 1–51 are disordered; sequence MNLSNLKPAEGSTKTRKRIGRGPGSGLGGTSTRGHKGAKSRSGYKNKIGFE. The segment covering 21–31 has biased composition (gly residues); that stretch reads RGPGSGLGGTS. Residues 33 to 44 are compositionally biased toward basic residues; that stretch reads RGHKGAKSRSGY.

The protein belongs to the universal ribosomal protein uL15 family. As to quaternary structure, part of the 50S ribosomal subunit.

Functionally, binds to the 23S rRNA. This chain is Large ribosomal subunit protein uL15, found in Parabacteroides distasonis (strain ATCC 8503 / DSM 20701 / CIP 104284 / JCM 5825 / NCTC 11152).